Reading from the N-terminus, the 460-residue chain is Proton extrusion protein PxcA (460 aa).

The tract at residues 84–194 (RLPDPEQNGS…KTNLDNSNAP (111 aa)) is disordered. Basic and acidic residues predominate over residues 114-136 (NDGKDAENGRQSRDPSILEKLEF). The span at 167 to 194 (LTSSQPEPSDPSIKTNLAKTNLDNSNAP) shows a compositional bias: polar residues. A run of 4 helical transmembrane segments spans residues 242–262 (FLLL…HFLF), 337–357 (GLKN…LILI), 373–393 (IYGL…DVFV), and 420–440 (FIYG…KYWI).

It belongs to the CemA family.

The protein resides in the cell inner membrane. Its function is as follows. Required for H(+) efflux immediately after light irradiation to form a rapid H(+) concentration gradient across the thylakoid membranes. Together with PxcL, contributes to transient H(+) uptake following dark to light transition. This chain is Proton extrusion protein PxcA, found in Synechococcus sp. (strain JA-3-3Ab) (Cyanobacteria bacterium Yellowstone A-Prime).